Consider the following 142-residue polypeptide: Large ribosomal subunit protein uL11 (142 aa).

Belongs to the universal ribosomal protein uL11 family. As to quaternary structure, part of the ribosomal stalk of the 50S ribosomal subunit. Interacts with L10 and the large rRNA to form the base of the stalk. L10 forms an elongated spine to which L12 dimers bind in a sequential fashion forming a multimeric L10(L12)X complex. In terms of processing, one or more lysine residues are methylated.

Its function is as follows. Forms part of the ribosomal stalk which helps the ribosome interact with GTP-bound translation factors. This chain is Large ribosomal subunit protein uL11, found in Mycobacterium leprae (strain Br4923).